The chain runs to 397 residues: ATP phosphoribosyltransferase regulatory subunit (397 aa).

This sequence belongs to the class-II aminoacyl-tRNA synthetase family. HisZ subfamily. In terms of assembly, heteromultimer composed of HisG and HisZ subunits.

It is found in the cytoplasm. The protein operates within amino-acid biosynthesis; L-histidine biosynthesis; L-histidine from 5-phospho-alpha-D-ribose 1-diphosphate: step 1/9. Functionally, required for the first step of histidine biosynthesis. May allow the feedback regulation of ATP phosphoribosyltransferase activity by histidine. The chain is ATP phosphoribosyltransferase regulatory subunit from Nitrosococcus oceani (strain ATCC 19707 / BCRC 17464 / JCM 30415 / NCIMB 11848 / C-107).